A 150-amino-acid polypeptide reads, in one-letter code: UPF0039 protein C11D3.02c (150 aa).

Positions 9–150 constitute an N-acetyltransferase domain; sequence KYFNSLDVKE…IPHVEMRLEL (142 aa).

It belongs to the UPF0039 (ElaA) family.

The polypeptide is UPF0039 protein C11D3.02c (Schizosaccharomyces pombe (strain 972 / ATCC 24843) (Fission yeast)).